The primary structure comprises 317 residues: Cyclin-T1-3 (317 aa).

The protein belongs to the cyclin family. Cyclin T subfamily. In terms of assembly, interacts with CDKC-1 and CDKC-2. Abundantly expressed in flowers. Expressed in roots, seedlings, rosettes and stems.

In Arabidopsis thaliana (Mouse-ear cress), this protein is Cyclin-T1-3 (CYCT1-3).